The chain runs to 801 residues: Na(+)/H(+) antiporter subunit A1 (801 aa).

21 helical membrane passes run 4-25 (LHIA…YRFF), 30-49 (LGWF…LTLI), 79-101 (LGLL…SIGY), 108-127 (LGNF…GVVL), 131-153 (VIIL…SFWR), 166-188 (LIIT…IPTQ), 208-230 (FIFA…PFYI), 243-265 (SAYL…MTPI), 270-289 (QGWI…WASL), 302-324 (AFST…ISYH), 339-361 (AAIF…TGAV), 373-395 (LGGL…LSMA), 429-451 (YLFP…KFIM), 472-494 (ILML…FPGI), 526-548 (AFLS…SYWV), 589-611 (NNLV…SVPF), 621-641 (IRIF…LILF), 646-668 (LFSI…FFKA), 672-694 (ALTQ…YHLP), 707-729 (LTNA…IAYG), and 767-784 (LFES…YTMI).

Belongs to the CPA3 antiporters (TC 2.A.63) subunit A family. In terms of assembly, may form a heterooligomeric complex that consists of seven subunits: mnhA1, mnhB1, mnhC1, mnhD1, mnhE1, mnhF1 and mnhG1.

It is found in the cell membrane. With respect to regulation, na(+) extrusion is completely inhibited by the H(+) conductor carbonyl cyanide m-chlorophenylhydrazone (CCCP). Its function is as follows. Mnh complex is a Na(+)/H(+) antiporter involved in Na(+) excretion. This chain is Na(+)/H(+) antiporter subunit A1 (mnhA1), found in Staphylococcus aureus (strain MRSA252).